We begin with the raw amino-acid sequence, 434 residues long: FAD-dependent monooxygenase cfoG (434 aa).

The N-terminal stretch at 1–22 (MKSSPGLHIIIVGAGITGLATA) is a signal peptide. Glutamate 36 contacts FAD. Active-site residues include arginine 193 and tyrosine 233. Residues aspartate 314 and glycine 327 each contribute to the FAD site.

This sequence belongs to the paxM FAD-dependent monooxygenase family. In terms of assembly, monomer. FAD is required as a cofactor.

Its pathway is secondary metabolite biosynthesis; flavonoid biosynthesis. Its function is as follows. Monooxygenase; part of the gene cluster that mediates the biosynthesis of chlorflavonin, a fungal flavonoid with acetolactate synthase inhibitory activity. Within the pathway, cfoG is responsible for the hydroxylation of the flavonoid skeleton at position C8. The pathway begins with the PKS-NRPS hybrid synthetase cfoA that uses benzoic acid or p-hydroxybenzoic acid as a starter unit with four rounds of chain elongation using malonyl-CoA to form the chalcone skeleton. Then, a new type of chalcone isomerase, cfoK, catalyzes the conversion of the chalcone into a flavanone by a histidine-mediated oxa-Michael addition mechanism. The desaturation of flavanone to flavone is catalyzed by a new type of flavone synthase, the flavin mononucleotide (FMN)-dependent oxidoreductase cfoJ. Monooxygenases cfoF, cfoG, and P450 cfoH are responsible for the hydroxylation of the flavonoid skeleton at sites C3, C8, and C2', respectively. Like cfoF, the dehydratase cfoI plays also a role in the hydroxylation of position C3. Methyltransferases cfoB, cfoC, and cfoD then catalyze the methylation of C7-OH, C8-OH, and C3-OH, respectively. Finally, the monooxygenase cfoE is responsible for the chlorination of flavonoid at position C3'. The polypeptide is FAD-dependent monooxygenase cfoG (Aspergillus candidus).